We begin with the raw amino-acid sequence, 323 residues long: Large ribosomal subunit protein uL10 (323 aa).

The tract at residues 296-323 (AAPAAPSAAAKEEPEESDEDDFGMGGLF) is disordered. Acidic residues predominate over residues 308–317 (EPEESDEDDF).

The protein belongs to the universal ribosomal protein uL10 family. In terms of assembly, P0 forms a pentameric complex by interaction with dimers of P1 and P2. In terms of processing, phosphorylated.

Ribosomal protein P0 is the functional equivalent of E.coli protein L10. The chain is Large ribosomal subunit protein uL10 (LIPO-A) from Leishmania infantum.